Consider the following 209-residue polypeptide: Chaperone protein TorD (209 aa).

The protein belongs to the TorD/DmsD family. TorD subfamily.

The protein resides in the cytoplasm. In terms of biological role, involved in the biogenesis of TorA. Acts on TorA before the insertion of the molybdenum cofactor and, as a result, probably favors a conformation of the apoenzyme that is competent for acquiring the cofactor. This is Chaperone protein TorD from Salmonella bongori (strain ATCC 43975 / DSM 13772 / NCTC 12419).